The following is a 288-amino-acid chain: Diaminopimelate epimerase (288 aa).

The substrate site is built by Asn-14 and Asn-67. Residue Cys-76 is the Proton donor of the active site. Substrate contacts are provided by residues 77-78 (GN), Asn-166, Asn-199, and 217-218 (ER). The active-site Proton acceptor is Cys-226. 227–228 (GT) contributes to the substrate binding site.

It belongs to the diaminopimelate epimerase family. In terms of assembly, homodimer.

The protein localises to the cytoplasm. The enzyme catalyses (2S,6S)-2,6-diaminopimelate = meso-2,6-diaminopimelate. Its pathway is amino-acid biosynthesis; L-lysine biosynthesis via DAP pathway; DL-2,6-diaminopimelate from LL-2,6-diaminopimelate: step 1/1. In terms of biological role, catalyzes the stereoinversion of LL-2,6-diaminopimelate (L,L-DAP) to meso-diaminopimelate (meso-DAP), a precursor of L-lysine and an essential component of the bacterial peptidoglycan. The chain is Diaminopimelate epimerase from Bacillus cereus (strain ATCC 10987 / NRS 248).